Consider the following 321-residue polypeptide: uncharacterized protein (321 aa).

This sequence belongs to the carbohydrate kinase PfkB family.

This is an uncharacterized protein from Escherichia coli (strain K12).